The following is a 276-amino-acid chain: uncharacterized protein (276 aa).

It to E.cuniculi ECU05_1600/ECU11_0130.

This is an uncharacterized protein from Encephalitozoon cuniculi (strain GB-M1) (Microsporidian parasite).